The following is a 337-amino-acid chain: Phospholipase A1 1 (337 aa).

The N-terminal stretch at 1 to 21 (MNFKYSILFICFVKVLDNCYA) is a signal peptide. A propeptide spanning residues 22 to 35 (ADDLTTLRNGTLDR) is cleaved from the precursor. C41 and C124 are joined by a disulfide. Residue S174 is the Nucleophile of the active site. Residue D202 is the Charge relay system of the active site. 2 disulfides stabilise this stretch: C213–C218 and C256–C261. H263 acts as the Charge relay system in catalysis. 3 disulfide bridges follow: C278–C305, C279–C330, and C298–C303.

It belongs to the AB hydrolase superfamily. Lipase family. Expressed by the venom gland.

Its subcellular location is the secreted. It carries out the reaction a 1,2-diacyl-sn-glycero-3-phosphocholine + H2O = a 2-acyl-sn-glycero-3-phosphocholine + a fatty acid + H(+). Functionally, catalyzes the hydrolysis of phosphatidylcholine with phospholipase A1 activity. May act as an allergen and induce hemolytic activity. The chain is Phospholipase A1 1 from Polistes dominula (European paper wasp).